We begin with the raw amino-acid sequence, 141 residues long: Hemoglobin subunit alpha (141 aa).

In terms of domain architecture, Globin spans 1–141 (VLSSADKNNV…VSTVLTSKYR (141 aa)). Residue Ser-3 is modified to Phosphoserine. An N6-succinyllysine mark is found at Lys-7 and Lys-11. Lys-16 carries the post-translational modification N6-acetyllysine; alternate. Lys-16 carries the post-translational modification N6-succinyllysine; alternate. Phosphotyrosine is present on Tyr-24. Ser-35 carries the post-translational modification Phosphoserine. Position 40 is an N6-succinyllysine (Lys-40). At Ser-49 the chain carries Phosphoserine. His-58 lines the O2 pocket. His-87 is a heme b binding site. Ser-102 is modified (phosphoserine). Thr-108 is subject to Phosphothreonine. Ser-124 carries the post-translational modification Phosphoserine. 2 positions are modified to phosphothreonine: Thr-134 and Thr-137. Ser-138 is modified (phosphoserine).

The protein belongs to the globin family. As to quaternary structure, heterotetramer of two alpha chains and two beta chains. In terms of tissue distribution, red blood cells.

In terms of biological role, involved in oxygen transport from the lung to the various peripheral tissues. Functionally, hemopressin acts as an antagonist peptide of the cannabinoid receptor CNR1. Hemopressin-binding efficiently blocks cannabinoid receptor CNR1 and subsequent signaling. In Panthera tigris sumatrae (Sumatran tiger), this protein is Hemoglobin subunit alpha (HBA).